The primary structure comprises 644 residues: Acetolactate synthase 1, chloroplastic (644 aa).

The transit peptide at 1-43 directs the protein to the chloroplast; the sequence is MATTAAAAAAALSAAATAKTGRKNHQRHHVLPARGRVGAAAVR. The interval 47–67 is disordered; that stretch reads VSPVTPPSPAPPATPLRPWGP. A compositionally biased stretch (pro residues) spans 50 to 61; the sequence is VTPPSPAPPATP. Position 118 (E118) interacts with thiamine diphosphate. A disulfide bond links C138 and C284. FAD-binding positions include R220, 326 to 347, and 369 to 388; these read HGTV…FGVR and DIDP…ICAD. Residues 461 to 541 form a thiamine pyrophosphate binding region; sequence QHQMWAAQYY…VKVMVLNNQH (81 aa). Residues D512 and N539 each coordinate Mg(2+).

Belongs to the TPP enzyme family. It depends on Mg(2+) as a cofactor. Thiamine diphosphate is required as a cofactor.

It localises to the plastid. Its subcellular location is the chloroplast. It carries out the reaction 2 pyruvate + H(+) = (2S)-2-acetolactate + CO2. It participates in amino-acid biosynthesis; L-isoleucine biosynthesis; L-isoleucine from 2-oxobutanoate: step 1/4. Its pathway is amino-acid biosynthesis; L-valine biosynthesis; L-valine from pyruvate: step 1/4. In Oryza sativa subsp. japonica (Rice), this protein is Acetolactate synthase 1, chloroplastic (ALS1).